A 425-amino-acid chain; its full sequence is 5-nitroanthranilic acid aminohydrolase (425 aa).

Asp88 is an active-site residue. Catalysis depends on Glu158, which acts as the Proton acceptor.

It belongs to the peptidase M20A family. It depends on Co(2+) as a cofactor. Mn(2+) is required as a cofactor. The cofactor is Zn(2+). Requires Fe(2+) as cofactor. Ni(2+) serves as cofactor.

It carries out the reaction 5-nitroanthranilate + H2O + H(+) = 5-nitrosalicylate + NH4(+). Functionally, catalyzes the deamination of 5-nitroanthranilate (5NAA) to 5-nitrosalicylate (5NSA), the first step in biodegradation of 5-nitroanthranilate. The polypeptide is 5-nitroanthranilic acid aminohydrolase (naaA) (Bradyrhizobium sp).